The sequence spans 157 residues: 2-C-methyl-D-erythritol 2,4-cyclodiphosphate synthase (157 aa).

A divalent metal cation-binding residues include aspartate 8 and histidine 10. 4-CDP-2-C-methyl-D-erythritol 2-phosphate-binding positions include 8–10 (DVH) and 34–35 (HS). Histidine 42 is an a divalent metal cation binding site. Residues 56–58 (DIG), 61–65 (FPDTD), 100–106 (AQAPKMA), 132–135 (TTTE), phenylalanine 139, and arginine 142 each bind 4-CDP-2-C-methyl-D-erythritol 2-phosphate.

The protein belongs to the IspF family. As to quaternary structure, homotrimer. A divalent metal cation serves as cofactor.

The enzyme catalyses 4-CDP-2-C-methyl-D-erythritol 2-phosphate = 2-C-methyl-D-erythritol 2,4-cyclic diphosphate + CMP. Its pathway is isoprenoid biosynthesis; isopentenyl diphosphate biosynthesis via DXP pathway; isopentenyl diphosphate from 1-deoxy-D-xylulose 5-phosphate: step 4/6. In terms of biological role, involved in the biosynthesis of isopentenyl diphosphate (IPP) and dimethylallyl diphosphate (DMAPP), two major building blocks of isoprenoid compounds. Catalyzes the conversion of 4-diphosphocytidyl-2-C-methyl-D-erythritol 2-phosphate (CDP-ME2P) to 2-C-methyl-D-erythritol 2,4-cyclodiphosphate (ME-CPP) with a corresponding release of cytidine 5-monophosphate (CMP). The polypeptide is 2-C-methyl-D-erythritol 2,4-cyclodiphosphate synthase (Pseudomonas syringae pv. tomato (strain ATCC BAA-871 / DC3000)).